A 194-amino-acid polypeptide reads, in one-letter code: ATP-dependent Clp protease proteolytic subunit (194 aa).

Serine 98 functions as the Nucleophile in the catalytic mechanism. Histidine 123 is a catalytic residue.

Belongs to the peptidase S14 family. In terms of assembly, fourteen ClpP subunits assemble into 2 heptameric rings which stack back to back to give a disk-like structure with a central cavity, resembling the structure of eukaryotic proteasomes.

The protein resides in the cytoplasm. It carries out the reaction Hydrolysis of proteins to small peptides in the presence of ATP and magnesium. alpha-casein is the usual test substrate. In the absence of ATP, only oligopeptides shorter than five residues are hydrolyzed (such as succinyl-Leu-Tyr-|-NHMec, and Leu-Tyr-Leu-|-Tyr-Trp, in which cleavage of the -Tyr-|-Leu- and -Tyr-|-Trp bonds also occurs).. Its function is as follows. Cleaves peptides in various proteins in a process that requires ATP hydrolysis. Has a chymotrypsin-like activity. Plays a major role in the degradation of misfolded proteins. This Clostridium kluyveri (strain NBRC 12016) protein is ATP-dependent Clp protease proteolytic subunit.